We begin with the raw amino-acid sequence, 489 residues long: Homoserine O-acetyltransferase (489 aa).

In terms of domain architecture, AB hydrolase-1 spans 63–435 (NALVICHALS…SPEGHDAFLL (373 aa)). Ser162 is an active-site residue. Ser162 acts as the Nucleophile in catalysis. Residues 247 to 272 (RFGRNVPDPSKRQNINGTERLPTPPN) form a disordered region. Active-site residues include Asp401 and His430.

It belongs to the AB hydrolase superfamily. MetX family.

The enzyme catalyses L-homoserine + acetyl-CoA = O-acetyl-L-homoserine + CoA. The protein operates within amino-acid biosynthesis; L-methionine biosynthesis via de novo pathway; O-acetyl-L-homoserine from L-homoserine: step 1/1. In terms of biological role, commits homoserine to the methionine biosynthesis pathway by catalyzing its O-acetylation. The protein is Homoserine O-acetyltransferase (metE) of Emericella nidulans (strain FGSC A4 / ATCC 38163 / CBS 112.46 / NRRL 194 / M139) (Aspergillus nidulans).